The following is a 149-amino-acid chain: Prefoldin subunit alpha (149 aa).

This sequence belongs to the prefoldin alpha subunit family. Heterohexamer of two alpha and four beta subunits.

It is found in the cytoplasm. Its function is as follows. Molecular chaperone capable of stabilizing a range of proteins. Seems to fulfill an ATP-independent, HSP70-like function in archaeal de novo protein folding. In Methanoculleus marisnigri (strain ATCC 35101 / DSM 1498 / JR1), this protein is Prefoldin subunit alpha.